The primary structure comprises 983 residues: Protein translocase subunit SecA (983 aa).

ATP contacts are provided by residues glutamine 83, 101 to 105 (GEGKT), and aspartate 489. Positions 948-983 (ISSEEENNNEKTNININEDLERTKGEAQQTAKNPNE) are disordered. The span at 973–983 (EAQQTAKNPNE) shows a compositional bias: polar residues.

It belongs to the SecA family. In terms of assembly, monomer and homodimer. Part of the essential Sec protein translocation apparatus which comprises SecA, SecYEG and auxiliary proteins SecDF. Other proteins may also be involved.

The protein localises to the cell membrane. The protein resides in the cytoplasm. The enzyme catalyses ATP + H2O + cellular proteinSide 1 = ADP + phosphate + cellular proteinSide 2.. Part of the Sec protein translocase complex. Interacts with the SecYEG preprotein conducting channel. Has a central role in coupling the hydrolysis of ATP to the transfer of proteins into and across the cell membrane, serving as an ATP-driven molecular motor driving the stepwise translocation of polypeptide chains across the membrane. The sequence is that of Protein translocase subunit SecA from Mesomycoplasma hyopneumoniae (strain 7448) (Mycoplasma hyopneumoniae).